We begin with the raw amino-acid sequence, 449 residues long: Maltose-6'-phosphate glucosidase (449 aa).

6 to 72 (FSIVIAGGGS…PDIEFAATTD (67 aa)) provides a ligand contact to NAD(+). The substrate site is built by R95 and N149. C171 provides a ligand contact to Mn(2+). D172 functions as the Proton donor in the catalytic mechanism. H202 is a binding site for Mn(2+). The Proton acceptor role is filled by Y265. R285 contacts substrate.

It belongs to the glycosyl hydrolase 4 family. In terms of assembly, homotetramer. Requires Mn(2+) as cofactor. Fe(2+) is required as a cofactor. It depends on Co(2+) as a cofactor. The cofactor is Ni(2+). NAD(+) serves as cofactor.

The catalysed reaction is alpha-maltose 6'-phosphate + H2O = D-glucose 6-phosphate + D-glucose. Its activity is regulated as follows. Cellobiose-6'-phosphate and 6-phospho-beta-D-glucopyranoside are not substrates but competitive inhibitors of GlvA. In terms of biological role, hydrolyzes maltose-6'-phosphate and trehalose-6'-phosphate. Is involved in the catabolism of alpha-glycosides accumulated via a phosphoenolpyruvate-dependent maltose phosphotransferase system (PEP-PTS). Is also able to significantly catalyze the hydrolysis of both 6-phospho-alpha- and 6-phospho-beta-glucosides containing activated leaving groups such as p-nitrophenol and does so with retention and inversion, respectively, of the substrate anomeric configuration. The polypeptide is Maltose-6'-phosphate glucosidase (glvA) (Bacillus subtilis (strain 168)).